The following is a 279-amino-acid chain: NAD kinase (279 aa).

The active-site Proton acceptor is aspartate 57. NAD(+) is bound by residues 57–58 (DG), 133–134 (NE), arginine 159, aspartate 161, and 172–177 (TAYNKS).

It belongs to the NAD kinase family. A divalent metal cation serves as cofactor.

The protein resides in the cytoplasm. It carries out the reaction NAD(+) + ATP = ADP + NADP(+) + H(+). Functionally, involved in the regulation of the intracellular balance of NAD and NADP, and is a key enzyme in the biosynthesis of NADP. Catalyzes specifically the phosphorylation on 2'-hydroxyl of the adenosine moiety of NAD to yield NADP. This chain is NAD kinase, found in Streptococcus pyogenes serotype M28 (strain MGAS6180).